Here is a 137-residue protein sequence, read N- to C-terminus: Large ribosomal subunit protein uL13 (137 aa).

The protein belongs to the universal ribosomal protein uL13 family. As to quaternary structure, part of the 50S ribosomal subunit.

Functionally, this protein is one of the early assembly proteins of the 50S ribosomal subunit, although it is not seen to bind rRNA by itself. It is important during the early stages of 50S assembly. The protein is Large ribosomal subunit protein uL13 of Methanococcus maripaludis (strain DSM 14266 / JCM 13030 / NBRC 101832 / S2 / LL).